A 223-amino-acid chain; its full sequence is MHFTQQQLQRLMLHYAGKIAKDRKEQKIKLNYNEALAYICYELMELARKNLSVSELMSIGKTLLTSEDVIDGVASMLDEIQIELPFEDGTKLVTIHEPIANDDKIKAGEIFLSSEFIVLNENKTSIEIKVSNKGDRPIQVGSHFHFFEVNRFLSFDREKAYGKRLNIASGTSVRFEPGEEKTVSLIEFGGLKKVLGFNNLCDDFINDENKTKALSKAKEKGFL.

Positions 1–101 are urease gamma; sequence MHFTQQQLQR…LVTIHEPIAN (101 aa). The segment at 102–223 is urease beta; sequence DDKIKAGEIF…LSKAKEKGFL (122 aa).

This sequence in the N-terminal section; belongs to the urease gamma subunit family. It in the C-terminal section; belongs to the urease beta subunit family. As to quaternary structure, heterohexamer of 3 UreA (alpha) and 3 UreB (beta) subunits.

It localises to the cytoplasm. It catalyses the reaction urea + 2 H2O + H(+) = hydrogencarbonate + 2 NH4(+). It functions in the pathway nitrogen metabolism; urea degradation; CO(2) and NH(3) from urea (urease route): step 1/1. This Campylobacter lari protein is Urease subunit alpha.